Consider the following 123-residue polypeptide: Large ribosomal subunit protein bL12 (123 aa).

This sequence belongs to the bacterial ribosomal protein bL12 family. In terms of assembly, homodimer. Part of the ribosomal stalk of the 50S ribosomal subunit. Forms a multimeric L10(L12)X complex, where L10 forms an elongated spine to which 2 to 4 L12 dimers bind in a sequential fashion. Binds GTP-bound translation factors.

In terms of biological role, forms part of the ribosomal stalk which helps the ribosome interact with GTP-bound translation factors. Is thus essential for accurate translation. This is Large ribosomal subunit protein bL12 from Dehalococcoides mccartyi (strain ATCC BAA-2100 / JCM 16839 / KCTC 5957 / BAV1).